Here is a 54-residue protein sequence, read N- to C-terminus: Large ribosomal subunit protein bL33A (54 aa).

This sequence belongs to the bacterial ribosomal protein bL33 family.

The chain is Large ribosomal subunit protein bL33A from Mycolicibacterium gilvum (strain PYR-GCK) (Mycobacterium gilvum (strain PYR-GCK)).